The chain runs to 421 residues: UDP-N-acetylglucosamine 1-carboxyvinyltransferase (421 aa).

Residue K22–N23 participates in phosphoenolpyruvate binding. Position 93 (R93) interacts with UDP-N-acetyl-alpha-D-glucosamine. The active-site Proton donor is C117. At C117 the chain carries 2-(S-cysteinyl)pyruvic acid O-phosphothioketal. Residues R122 to L126, D308, and V330 each bind UDP-N-acetyl-alpha-D-glucosamine.

Belongs to the EPSP synthase family. MurA subfamily.

Its subcellular location is the cytoplasm. It catalyses the reaction phosphoenolpyruvate + UDP-N-acetyl-alpha-D-glucosamine = UDP-N-acetyl-3-O-(1-carboxyvinyl)-alpha-D-glucosamine + phosphate. It participates in cell wall biogenesis; peptidoglycan biosynthesis. Functionally, cell wall formation. Adds enolpyruvyl to UDP-N-acetylglucosamine. The sequence is that of UDP-N-acetylglucosamine 1-carboxyvinyltransferase from Pseudomonas paraeruginosa (strain DSM 24068 / PA7) (Pseudomonas aeruginosa (strain PA7)).